Reading from the N-terminus, the 102-residue chain is Large ribosomal subunit protein bL21 (102 aa).

This sequence belongs to the bacterial ribosomal protein bL21 family. Part of the 50S ribosomal subunit. Contacts protein L20.

This protein binds to 23S rRNA in the presence of protein L20. This Exiguobacterium sibiricum (strain DSM 17290 / CCUG 55495 / CIP 109462 / JCM 13490 / 255-15) protein is Large ribosomal subunit protein bL21.